The primary structure comprises 574 residues: Polyamine aminopropyltransferase (574 aa).

7 helical membrane-spanning segments follow: residues 22–42 (VLLL…EYLL), 55–75 (AAIY…AFAA), 90–110 (LTVA…IGFG), 144–164 (LPYF…PLIA), 188–208 (IGAG…DIQL), 209–229 (AAAL…WRFW), and 237–257 (LLLA…IQGP). A spermidine synthase region spans residues 254-510 (IQGPSWEQQF…ATLDGKDAQH (257 aa)). In terms of domain architecture, PABS spans 257-505 (PSWEQQFNNL…WGWSIATLDG (249 aa)). Gln281 serves as a coordination point for S-methyl-5'-thioadenosine. His317 and Asp341 together coordinate spermidine. S-methyl-5'-thioadenosine is bound by residues Asp360 and 403 to 404 (DA). Residue Asp424 is the Proton acceptor of the active site.

Belongs to the spermidine/spermine synthase family. Homodimer or homotetramer.

It is found in the cell membrane. The catalysed reaction is S-adenosyl 3-(methylsulfanyl)propylamine + putrescine = S-methyl-5'-thioadenosine + spermidine + H(+). It participates in amine and polyamine biosynthesis; spermidine biosynthesis; spermidine from putrescine: step 1/1. Functionally, catalyzes the irreversible transfer of a propylamine group from the amino donor S-adenosylmethioninamine (decarboxy-AdoMet) to putrescine (1,4-diaminobutane) to yield spermidine. The polypeptide is Polyamine aminopropyltransferase (Shewanella oneidensis (strain ATCC 700550 / JCM 31522 / CIP 106686 / LMG 19005 / NCIMB 14063 / MR-1)).